Here is an 824-residue protein sequence, read N- to C-terminus: Kinesin-like protein KIFC3 (824 aa).

A disordered region spans residues 27 to 79 (EPKPGMARPAPASPAARPFPHTGQGRLRTGRGKDILPSGEEDSTSRTAARPSL). Over residues 33 to 46 (ARPAPASPAARPFP) the composition is skewed to low complexity. 2 coiled-coil regions span residues 100–360 (LTVQ…ENLA) and 393–430 (LLQE…LQLR). A Kinesin motor domain is found at 443–766 (NIRVIARVRP…LRFAERVRSV (324 aa)). Residue 526-533 (GQTGAGKT) participates in ATP binding. The disordered stretch occupies residues 771-824 (GSRRTELGSWSSQEHLEWEPACQTPQPTARAHSAPGSGTSSRPGSIRRKLQPSA). Phosphoserine is present on residues S811 and S815. Over residues 815–824 (SIRRKLQPSA) the composition is skewed to basic residues.

Belongs to the TRAFAC class myosin-kinesin ATPase superfamily. Kinesin family. As to quaternary structure, interacts with annexin XIIIB. As to expression, predominant expression in the kidney, testis and ovary. Also expressed in brain, heart, liver, lung and uterus.

The protein localises to the cytoplasm. Its subcellular location is the cytoskeleton. It localises to the cytoplasmic vesicle membrane. The protein resides in the cell junction. It is found in the adherens junction. The protein localises to the microtubule organizing center. Its subcellular location is the centrosome. In terms of biological role, minus-end microtubule-dependent motor protein. Involved in apically targeted transport. Required for zonula adherens maintenance. The protein is Kinesin-like protein KIFC3 (Kifc3) of Mus musculus (Mouse).